The following is a 238-amino-acid chain: DNA repair protein RecO (238 aa).

Belongs to the RecO family.

In terms of biological role, involved in DNA repair and RecF pathway recombination. The sequence is that of DNA repair protein RecO from Aliivibrio fischeri (strain ATCC 700601 / ES114) (Vibrio fischeri).